Reading from the N-terminus, the 383-residue chain is MSITLNEVKRREKGLKIIKDKIETDGIDSLIDLTGLAGGFDITPEDISLLETYAGPAVYEQKVQKLGIKHLGGEKILPVNRTTSGIVAMIIALVKPGTKIVHFLAKKPAHPSIPRTAKLVGADYEEYTNLDEFKIDDNTSLVFITGTTMDLEVISVEDFKRVIKQAKEKDVIVAVDDASGARIRRAVYNQPTAIDLGADISVTSTDKLMEGPRGGLMAGSTEIIDKIKLVVNQYGLEAQAPLIVGMIKGLEKYSPERIQEAFKQKDELYQKLLDKQLNPQTTPTGFMFKEEEIKAEVEKRGAKVDMDADVIATVYSMLLIDNYNIITIPAVGMPGASKTVRFDWAAKDSDKLTMDELVSAVCDTFDKTVEVCKNNDFESVLYN.

N6-(pyridoxal phosphate)lysine is present on Lys-207.

The protein belongs to the UPF0425 family. Pyridoxal 5'-phosphate serves as cofactor.

This Methanosphaera stadtmanae (strain ATCC 43021 / DSM 3091 / JCM 11832 / MCB-3) protein is UPF0425 pyridoxal phosphate-dependent protein Msp_0916.